The sequence spans 154 residues: Nascent polypeptide-associated complex subunit beta (154 aa).

Residues 33–98 (EQDDTKLIEA…PQEKNVTQLI (66 aa)) form the NAC-A/B domain. Residues 125-154 (APTELNAGAPAGGDEGIPDLIDGEKFDEVE) are disordered.

It belongs to the NAC-beta family. Part of the nascent polypeptide-associated complex (NAC), consisting of EGD2 and EGD1. NAC associates with ribosomes via EGD1.

The protein localises to the cytoplasm. It localises to the nucleus. Its function is as follows. Component of the nascent polypeptide-associated complex (NAC), a dynamic component of the ribosomal exit tunnel, protecting the emerging polypeptides from interaction with other cytoplasmic proteins to ensure appropriate nascent protein targeting. The NAC complex also promotes mitochondrial protein import by enhancing productive ribosome interactions with the outer mitochondrial membrane and blocks the inappropriate interaction of ribosomes translating non-secretory nascent polypeptides with translocation sites in the membrane of the endoplasmic reticulum. EGD1 may act as a transcription factor that exert a negative effect on the expression of several genes that are transcribed by RNA polymerase II. The protein is Nascent polypeptide-associated complex subunit beta (EGD1) of Scheffersomyces stipitis (strain ATCC 58785 / CBS 6054 / NBRC 10063 / NRRL Y-11545) (Yeast).